The following is a 306-amino-acid chain: Glutaminase (306 aa).

Residues S64, N115, E159, N166, Y190, Y242, and V260 each coordinate substrate.

Belongs to the glutaminase family. As to quaternary structure, homotetramer.

It catalyses the reaction L-glutamine + H2O = L-glutamate + NH4(+). The polypeptide is Glutaminase (Aeromonas salmonicida (strain A449)).